Consider the following 566-residue polypeptide: E3 ubiquitin-protein ligase RNF220 (566 aa).

Lys-277 is covalently cross-linked (Glycyl lysine isopeptide (Lys-Gly) (interchain with G-Cter in SUMO2)). Positions 277-297 are disordered; sequence KREGESPTASPHSSATDDLHH. The residue at position 390 (Ser-390) is a Phosphoserine. A coiled-coil region spans residues 485-513; the sequence is EDSAVTTFEALKARVRELERQLSRGDRYK. The segment at 514 to 522 is required for targeting to the cytoplasm; sequence CLICMDSYS. The segment at 514–553 adopts an RING-type zinc-finger fold; it reads CLICMDSYSMPLTSIQCWHVHCEECWLRTLGAKKLCPQCY.

In terms of assembly, interacts with SIN3B. Interacts with CTNNB1 (via Armadillo repeats 2-8). Interacts with USP7 (via MATH domain). Auto-ubiquitinated; leads to proteasomal degradation.

It is found in the cytoplasm. The catalysed reaction is S-ubiquitinyl-[E2 ubiquitin-conjugating enzyme]-L-cysteine + [acceptor protein]-L-lysine = [E2 ubiquitin-conjugating enzyme]-L-cysteine + N(6)-ubiquitinyl-[acceptor protein]-L-lysine.. Its pathway is protein modification; protein ubiquitination. Its function is as follows. E3 ubiquitin-protein ligase that promotes the ubiquitination and proteasomal degradation of SIN3B. Independently of its E3 ligase activity, acts as a CTNNB1 stabilizer through USP7-mediated deubiquitination of CTNNB1 promoting Wnt signaling. In Bos taurus (Bovine), this protein is E3 ubiquitin-protein ligase RNF220 (RNF220).